We begin with the raw amino-acid sequence, 439 residues long: Xylose isomerase (439 aa).

Catalysis depends on residues H101 and D104. Positions 232, 268, 271, 296, 307, 309, and 339 each coordinate Mg(2+).

This sequence belongs to the xylose isomerase family. As to quaternary structure, homotetramer. Mg(2+) is required as a cofactor.

The protein localises to the cytoplasm. It catalyses the reaction alpha-D-xylose = alpha-D-xylulofuranose. This is Xylose isomerase from Pseudoalteromonas atlantica (strain T6c / ATCC BAA-1087).